The primary structure comprises 801 residues: Phenylalanine--tRNA ligase beta subunit (801 aa).

One can recognise a tRNA-binding domain in the interval 39-153 (AEGLSKLVVG…EGAIPGDSIF (115 aa)). The 76-residue stretch at 406 to 481 (TEPVEVSTTL…RIYGYEKLPT (76 aa)) folds into the B5 domain. 4 residues coordinate Mg(2+): D459, D465, E468, and E469. In terms of domain architecture, FDX-ACB spans 708 to 801 (TKYPSVSRDI…LVEKVNAEIR (94 aa)).

It belongs to the phenylalanyl-tRNA synthetase beta subunit family. Type 1 subfamily. Tetramer of two alpha and two beta subunits. The cofactor is Mg(2+).

It localises to the cytoplasm. The enzyme catalyses tRNA(Phe) + L-phenylalanine + ATP = L-phenylalanyl-tRNA(Phe) + AMP + diphosphate + H(+). This is Phenylalanine--tRNA ligase beta subunit from Streptococcus agalactiae serotype V (strain ATCC BAA-611 / 2603 V/R).